Reading from the N-terminus, the 523-residue chain is GMP synthase [glutamine-hydrolyzing] (523 aa).

The region spanning 8 to 205 (RILILDFGSQ…IRELCECEAL (198 aa)) is the Glutamine amidotransferase type-1 domain. Residue Cys85 is the Nucleophile of the active site. Catalysis depends on residues His179 and Glu181. One can recognise a GMPS ATP-PPase domain in the interval 206–398 (WTPSNIISDA…LGLPYDMVYR (193 aa)). ATP is bound at residue 233–239 (SGGVDSS).

In terms of assembly, homodimer.

The catalysed reaction is XMP + L-glutamine + ATP + H2O = GMP + L-glutamate + AMP + diphosphate + 2 H(+). It functions in the pathway purine metabolism; GMP biosynthesis; GMP from XMP (L-Gln route): step 1/1. Catalyzes the synthesis of GMP from XMP. The polypeptide is GMP synthase [glutamine-hydrolyzing] (Alcanivorax borkumensis (strain ATCC 700651 / DSM 11573 / NCIMB 13689 / SK2)).